A 274-amino-acid chain; its full sequence is Large ribosomal subunit protein uL2 (274 aa).

A disordered region spans residues 195-274 (VGNSDHGLER…SKYIIERRKK (80 aa)). Composition is skewed to basic residues over residues 207–220 (KAGR…RPRN) and 244–264 (PRSR…KKQS).

Belongs to the universal ribosomal protein uL2 family. In terms of assembly, part of the 50S ribosomal subunit. Forms a bridge to the 30S subunit in the 70S ribosome.

One of the primary rRNA binding proteins. Required for association of the 30S and 50S subunits to form the 70S ribosome, for tRNA binding and peptide bond formation. It has been suggested to have peptidyltransferase activity; this is somewhat controversial. Makes several contacts with the 16S rRNA in the 70S ribosome. The chain is Large ribosomal subunit protein uL2 from Bacteroides thetaiotaomicron (strain ATCC 29148 / DSM 2079 / JCM 5827 / CCUG 10774 / NCTC 10582 / VPI-5482 / E50).